Here is a 561-residue protein sequence, read N- to C-terminus: Potassium-transporting ATPase potassium-binding subunit (561 aa).

10 helical membrane passes run 4–24, 65–85, 133–153, 177–197, 253–273, 285–305, 380–400, 417–437, 484–504, and 528–548; these read IVMQ…PLGI, AVSV…VLML, IGLT…LFAV, LYIL…QGVV, FTNL…VVMF, AIMT…TISE, GLYG…LLVG, MVCL…AVAV, MVGA…ALYL, and FIGL…LPAL.

This sequence belongs to the KdpA family. In terms of assembly, the system is composed of three essential subunits: KdpA, KdpB and KdpC.

The protein resides in the cell membrane. In terms of biological role, part of the high-affinity ATP-driven potassium transport (or Kdp) system, which catalyzes the hydrolysis of ATP coupled with the electrogenic transport of potassium into the cytoplasm. This subunit binds the extracellular potassium ions and delivers the ions to the membrane domain of KdpB through an intramembrane tunnel. The protein is Potassium-transporting ATPase potassium-binding subunit of Listeria monocytogenes serotype 4b (strain CLIP80459).